The sequence spans 158 residues: Small ribosomal subunit protein uS9 (158 aa).

It belongs to the universal ribosomal protein uS9 family.

The sequence is that of Small ribosomal subunit protein uS9 from Nitrobacter hamburgensis (strain DSM 10229 / NCIMB 13809 / X14).